Consider the following 439-residue polypeptide: Ribulose bisphosphate carboxylase/oxygenase activase 2, chloroplastic (439 aa).

Residues 1-58 (MATSVSTIGAANKAPLSLNNSVAGTSVPSTAFFGKTLKKVYGKGVSSPKVTNRSLRIA) constitute a chloroplast transit peptide. Residue 169-176 (GGKGQGKS) coordinates ATP.

The protein belongs to the RuBisCO activase family.

It is found in the plastid. Its subcellular location is the chloroplast stroma. In terms of biological role, activation of RuBisCO (ribulose-1,5-bisphosphate carboxylase/oxygenase; EC 4.1.1.39) involves the ATP-dependent carboxylation of the epsilon-amino group of lysine leading to a carbamate structure. This chain is Ribulose bisphosphate carboxylase/oxygenase activase 2, chloroplastic (RCA), found in Nicotiana tabacum (Common tobacco).